The primary structure comprises 194 residues: UPF0301 protein BT_0659 (194 aa).

The protein belongs to the UPF0301 (AlgH) family.

This Bartonella tribocorum (strain CIP 105476 / IBS 506) protein is UPF0301 protein BT_0659.